The chain runs to 149 residues: Calmodulin (149 aa).

Ala2 carries the post-translational modification N-acetylalanine. EF-hand domains lie at 8–43, 44–79, 81–116, and 117–149; these read EQIS…LGQN, PTEA…KMRD, DSEE…LGEK, and LTDN…MLSK. Asp21, Asp23, Asp25, Thr27, Glu32, Asp57, Asp59, Asn61, Thr63, Glu68, Asp94, Asp96, Asn98, Tyr100, Glu105, Asp130, Asp132, Asp134, Gln136, and Glu141 together coordinate Ca(2+).

It belongs to the calmodulin family.

Functionally, calmodulin mediates the control of a large number of enzymes, ion channels and other proteins by Ca(2+). Among the enzymes to be stimulated by the calmodulin-Ca(2+) complex are a number of protein kinases and phosphatases. The sequence is that of Calmodulin (CMD1) from Pleurotus ostreatus (Oyster mushroom).